The chain runs to 339 residues: 3-isopropylmalate dehydrogenase (339 aa).

The substrate site is built by Arg-87, Arg-97, Arg-124, and Asp-214. Mg(2+)-binding residues include Asp-214, Asp-238, and Asp-242. 274 to 286 (GSAPDIAGQGIAD) contacts NAD(+).

It belongs to the isocitrate and isopropylmalate dehydrogenases family. LeuB type 2 subfamily. Homodimer. The cofactor is Mg(2+). Requires Mn(2+) as cofactor.

Its subcellular location is the cytoplasm. It catalyses the reaction (2R,3S)-3-isopropylmalate + NAD(+) = 4-methyl-2-oxopentanoate + CO2 + NADH. It functions in the pathway amino-acid biosynthesis; L-leucine biosynthesis; L-leucine from 3-methyl-2-oxobutanoate: step 3/4. Functionally, catalyzes the oxidation of 3-carboxy-2-hydroxy-4-methylpentanoate (3-isopropylmalate) to 3-carboxy-4-methyl-2-oxopentanoate. The product decarboxylates to 4-methyl-2 oxopentanoate. This chain is 3-isopropylmalate dehydrogenase, found in Mycobacterium marinum (strain ATCC BAA-535 / M).